A 257-amino-acid chain; its full sequence is uncharacterized protein (257 aa).

Basic and acidic residues predominate over residues 74-83; it reads LKDDLTRDNS. Disordered regions lie at residues 74–115 and 209–257; these read LKDD…TQKR and PYLN…YDSF. Residues 100–113 show a composition bias toward polar residues; it reads SFQNMNSSMPSSTQ. Over residues 216–236 the composition is skewed to acidic residues; sequence SEDDTDSSIVEVETDYSEEEK.

Belongs to the asfivirus DP238L family.

This is an uncharacterized protein from Ornithodoros (relapsing fever ticks).